Consider the following 360-residue polypeptide: Phenylalanine--tRNA ligase alpha subunit (360 aa).

Glutamate 260 contacts Mg(2+).

This sequence belongs to the class-II aminoacyl-tRNA synthetase family. Phe-tRNA synthetase alpha subunit type 1 subfamily. Tetramer of two alpha and two beta subunits. It depends on Mg(2+) as a cofactor.

It localises to the cytoplasm. The enzyme catalyses tRNA(Phe) + L-phenylalanine + ATP = L-phenylalanyl-tRNA(Phe) + AMP + diphosphate + H(+). The sequence is that of Phenylalanine--tRNA ligase alpha subunit from Rhizobium etli (strain ATCC 51251 / DSM 11541 / JCM 21823 / NBRC 15573 / CFN 42).